Here is a 218-residue protein sequence, read N- to C-terminus: Deoxyribose-phosphate aldolase (218 aa).

D92 functions as the Proton donor/acceptor in the catalytic mechanism. K156 (schiff-base intermediate with acetaldehyde) is an active-site residue. The active-site Proton donor/acceptor is K185.

It belongs to the DeoC/FbaB aldolase family. DeoC type 1 subfamily.

The protein resides in the cytoplasm. It catalyses the reaction 2-deoxy-D-ribose 5-phosphate = D-glyceraldehyde 3-phosphate + acetaldehyde. It participates in carbohydrate degradation; 2-deoxy-D-ribose 1-phosphate degradation; D-glyceraldehyde 3-phosphate and acetaldehyde from 2-deoxy-alpha-D-ribose 1-phosphate: step 2/2. Catalyzes a reversible aldol reaction between acetaldehyde and D-glyceraldehyde 3-phosphate to generate 2-deoxy-D-ribose 5-phosphate. The chain is Deoxyribose-phosphate aldolase from Desulfitobacterium hafniense (strain DSM 10664 / DCB-2).